Consider the following 182-residue polypeptide: Small ribosomal subunit protein uS9 (182 aa).

It belongs to the universal ribosomal protein uS9 family.

In Corynebacterium glutamicum (strain R), this protein is Small ribosomal subunit protein uS9.